We begin with the raw amino-acid sequence, 511 residues long: MNQILIQGVIIIISLLSIIIINQKDIILINIKNKYIKQISLLLIIYFIYIGIYINYLFNNNILGFQLINNYININWGIDGISLWLINLTLILLPISLISNWNISKNEDKSKVLTYVLLILIIGIIIILNFICLDLITFYILFEATLLPLFILIGKLGSLPYNGNNKIIIKGINNNNITPREKAAYYIFIYTLFSSLFMLLSIGIYIYMINNIDYNNIYNIILSIDLQSIIFIGLIIGILVKTPVFPVHTWLPLVHAESPISGSIILAGIIIKLAIYAIIRLILINLSDVIIIYNPLIYTIGILTIFYIGLITLKQIDIKVIIAYSSIIHMAIAIMSIFSNNILGIEGSLLISIAHGFASPALFLLVGGILYDRYHSRLIYYYQSLATYMPIFSIYLLIAGLFNMGIPLSLNFIGEFLSLNGIFIYNSLFAILSTFSLFITTIYQMKLTTKLLYGYKSIYINIWSIWGNDVNKRELLLLNILFFFIILFGIYPNLIIKSLNLSISSLLYIPF.

14 helical membrane passes run 1–21 (MNQI…IIII), 39–59 (ISLL…YLFN), 78–98 (IDGI…ISLI), 116–136 (VLLI…LDLI), 137–157 (TFYI…GKLG), 186–206 (YIFI…GIYI), 220–240 (IILS…GILV), 264–284 (IILA…LILI), 289–309 (VIII…FYIG), 318–338 (IKVI…MSIF), 349–369 (LLIS…VGGI), 388–408 (YMPI…GIPL), 422–442 (IFIY…ITTI), and 476–496 (LLLN…NLII).

Belongs to the complex I subunit 4 family.

Its subcellular location is the mitochondrion membrane. The enzyme catalyses a ubiquinone + NADH + 5 H(+)(in) = a ubiquinol + NAD(+) + 4 H(+)(out). In terms of biological role, core subunit of the mitochondrial membrane respiratory chain NADH dehydrogenase (Complex I) that is believed to belong to the minimal assembly required for catalysis. Complex I functions in the transfer of electrons from NADH to the respiratory chain. The immediate electron acceptor for the enzyme is believed to be ubiquinone. This is NADH-ubiquinone oxidoreductase chain 4 (ND4) from Wickerhamomyces canadensis (Yeast).